The following is an 83-amino-acid chain: Small ribosomal subunit protein uS17 (83 aa).

Belongs to the universal ribosomal protein uS17 family. In terms of assembly, part of the 30S ribosomal subunit.

Its function is as follows. One of the primary rRNA binding proteins, it binds specifically to the 5'-end of 16S ribosomal RNA. This Chlamydia muridarum (strain MoPn / Nigg) protein is Small ribosomal subunit protein uS17.